Reading from the N-terminus, the 940-residue chain is MSDYKFTLNLPETEFPMRGNLANREPEMLERWTKDGLYQQIRDSRIGRTPFILHDGPPYANGSIHIGHSVNKILKDIIVKSKTMSGFDAPYVPGWDCHGLPIELKVEQKVGKPGQKITAAEFREECRKYAAEQVNGQREDFIRLGVLGDWQNPYLTMDFSTEANIVRSLSKVIESGHLHKGVKPVHWCTDCGSALAEAEVEYEDKTSPAIDVAFVAADSKAVAAKFGVSDYSHPVSMVIWTTTPWTLPANRALSLSPELDYSLVEFEKDGVTQALILAEVLVESCLTRYNVESHTVLGTTKGAALELVCFNHPFLDFDVPAILGDHVTTDAGTGIVHTAPGHGQDDFVVGQKYGLEVANPVGDNGVYKPDTKYFAGQHVFKANDNVVALLREKGALLNHVAYRHSYPHCWRHKTPIIFRATPQWFISMDNHGLRTQALKEIEQTQWIPDWGQSRIEKMVENRPDWCISRQRTWGVPITLFVNRETEELHPDSVSLMERVANRIEQQGIQAWWDLDAAELLGDEADQYRKVTDTLDVWYDSGSTFSSVVAARPEFHGHGVDLYLEGSDQHRGWFMSSLMISTAMNGKAPYKQVLTHGFTVDGKGRKMSKSIGNVIAPQTVTNKLGADILRLWVAATDYSGEMTVSDEILNRSADAYRRIRNTARFLLANLNGFDPAKDLVAVEDMVALDRWVVRRAAALQQEIIEAYDQYNFHIVTQKLMQFCSVELGSFYLDIIKDRQYTAKQEGHARRSCQSALFHIAEAMVRWIAPVLSFTADEVWQLLPGERDAYVFTQEWYQGLKSVTLATDLSDDYWQQLLAVRNEVNKVIEQARRDKRIGGSLEAEVTLFADATLTEQLTHIGDELRFVLLTSEAKVLPLADATTEAVETELASLKLVVASSTAEKCERCWHHREEVGSIEAHPTLCTRCVTNIEGDGEVRQFA.

The short motif at proline 58 to histidine 68 is the 'HIGH' region element. Residue glutamate 564 participates in L-isoleucyl-5'-AMP binding. The short motif at lysine 605–serine 609 is the 'KMSKS' region element. Position 608 (lysine 608) interacts with ATP. Positions 903, 906, 923, and 926 each coordinate Zn(2+).

The protein belongs to the class-I aminoacyl-tRNA synthetase family. IleS type 1 subfamily. As to quaternary structure, monomer. The cofactor is Zn(2+).

It is found in the cytoplasm. The enzyme catalyses tRNA(Ile) + L-isoleucine + ATP = L-isoleucyl-tRNA(Ile) + AMP + diphosphate. Functionally, catalyzes the attachment of isoleucine to tRNA(Ile). As IleRS can inadvertently accommodate and process structurally similar amino acids such as valine, to avoid such errors it has two additional distinct tRNA(Ile)-dependent editing activities. One activity is designated as 'pretransfer' editing and involves the hydrolysis of activated Val-AMP. The other activity is designated 'posttransfer' editing and involves deacylation of mischarged Val-tRNA(Ile). The chain is Isoleucine--tRNA ligase from Shewanella sp. (strain W3-18-1).